Here is a 262-residue protein sequence, read N- to C-terminus: Probable carboxylesterase Culp3 (262 aa).

A signal peptide spans 1–41 (MNNRPIRLLTSGRAGLGAGALITAVVLLIALGAVWTPVAFA). A disulfide bridge connects residues Cys44 and Cys114. Residue Ser125 is the Nucleophile of the active site. Cys188 and Cys195 are oxidised to a cystine. Asp192 is a catalytic residue. His206 serves as the catalytic Proton donor/acceptor. Residues 241–262 (LPGSVLQMPGTAAPAPESLHGR) form a disordered region.

Belongs to the cutinase family.

The protein resides in the secreted. Functionally, shows weak esterase activity with the p-nitrophenol-linked aliphatic ester pNP-butyrate. Does not exhibit cutinase activity. This is Probable carboxylesterase Culp3 (cut3) from Mycobacterium tuberculosis (strain ATCC 25618 / H37Rv).